The chain runs to 554 residues: Solute carrier family 22 member 2 (554 aa).

The Cytoplasmic portion of the chain corresponds to 1–21 (MPTVDDILEQVGHFHFFQKQT). The chain crosses the membrane as a helical span at residues 22–42 (FFLLALISAAFTPIYVGIVFL). Over 43–149 (GFTPDHRCRS…LVCARSWMLD (107 aa)) the chain is Extracellular. N-linked (GlcNAc...) asparagine glycosylation is present at Asn71. The chain crosses the membrane as a helical span at residues 150–170 (LFQSAVNIGFFIGSVGIGYLA). Topologically, residues 171–176 (DRFGRK) are cytoplasmic. The chain crosses the membrane as a helical span at residues 177–197 (LCLLVTILINAAAGVLMAVSP). N-linked (GlcNAc...) asparagine glycosylation occurs at Asn198. Residues 198-209 (NYTWMLIFRLIQ) lie on the Extracellular side of the membrane. Residues 210 to 230 (GLVSKAGWLIGYILITEFVGL) traverse the membrane as a helical segment. Over 231-237 (NYRRTVG) the chain is Cytoplasmic. The helical transmembrane segment at 238 to 258 (ILYQVAFTVGLLVLAGVAYAL) threads the bilayer. The Extracellular segment spans residues 259 to 262 (PRWR). A helical membrane pass occupies residues 263-283 (WLQLTVTLPYFCFLLYYWCIP). Residues 283–287 (PESPR) carry the Proline-rich sequence motif. Topologically, residues 284–348 (ESPRWLISQN…RTPQIRKHTC (65 aa)) are cytoplasmic. The helical transmembrane segment at 349–369 (ILMYNWFTSSVLYQGLIMHLG) threads the bilayer. Residues 370 to 374 (LAGGD) lie on the Extracellular side of the membrane. A helical membrane pass occupies residues 375 to 395 (IYLDFFYSALVEFPAAFLIIA). Residues 396–403 (TIDRVGRR) lie on the Cytoplasmic side of the membrane. The chain crosses the membrane as a helical span at residues 404–424 (YPWAVSNMVAGAACLASVFVP). Residues 425 to 427 (DDL) are Extracellular-facing. Residues 428–450 (QGLRITVACLGRMGITMAYEMVC) form a helical membrane-spanning segment. At 451–463 (LVNAELYPTFIRN) the chain is on the cytoplasmic side. Residues 464–484 (LGVLVCSSLCDVGGIVTPFLV) form a helical membrane-spanning segment. Residues 485-493 (YRLTAIWLQ) lie on the Extracellular side of the membrane. The chain crosses the membrane as a helical span at residues 494–514 (LPLVVFAVVGLVAGGLVLMLP). Residues 515 to 554 (ETKGRTLPETIEEAENLQRPRKNREKVIYVHVRKADGPLT) lie on the Cytoplasmic side of the membrane.

This sequence belongs to the major facilitator (TC 2.A.1) superfamily. Organic cation transporter (TC 2.A.1.19) family. Tyrosine phosphorylated. Expressed in kidney.

It is found in the basolateral cell membrane. Its subcellular location is the basal cell membrane. It carries out the reaction (R)-noradrenaline(out) = (R)-noradrenaline(in). The enzyme catalyses (R)-adrenaline(out) = (R)-adrenaline(in). The catalysed reaction is serotonin(out) = serotonin(in). It catalyses the reaction dopamine(out) = dopamine(in). It carries out the reaction histamine(out) = histamine(in). The enzyme catalyses thiamine(in) = thiamine(out). The catalysed reaction is creatinine(in) = creatinine(out). It catalyses the reaction 1-methylnicotinamide(out) = 1-methylnicotinamide(in). It carries out the reaction guanidine(out) = guanidine(in). The enzyme catalyses choline(out) = choline(in). The catalysed reaction is agmatine(out) = agmatine(in). It catalyses the reaction putrescine(out) = putrescine(in). It carries out the reaction spermidine(in) = spermidine(out). The enzyme catalyses tyramine(in) = tyramine(out). The catalysed reaction is L-histidyl-L-proline diketopiperazine(in) = L-histidyl-L-proline diketopiperazine(out). It catalyses the reaction (R)-salsolinol(in) = (R)-salsolinol(out). It carries out the reaction N-methyl-(R)-salsolinol(in) = N-methyl-(R)-salsolinol(out). The enzyme catalyses acetylcholine(in) = acetylcholine(out). The catalysed reaction is prostaglandin F2alpha(out) = prostaglandin F2alpha(in). It catalyses the reaction prostaglandin E2(out) = prostaglandin E2(in). Tyrosine phosphorylation of the transporter leads to activation of the transport activity. Inhibited by cGMP, most likely through a cGMP-binding protein that interacts with OCT2. In terms of biological role, electrogenic voltage-dependent transporter that mediates the transport of a variety of organic cations such as endogenous bioactive amines, cationic drugs and xenobiotics. Functions as a Na(+)-independent, bidirectional uniporter. Cation cellular uptake or release is driven by the electrochemical potential, i.e. membrane potential and concentration gradient. However, may also engage electroneutral cation exchange when saturating concentrations of cation substrates are reached. Predominantly expressed at the basolateral membrane of hepatocytes and proximal tubules and involved in the uptake and disposition of cationic compounds by hepatic and renal clearance from the blood flow. Implicated in monoamine neurotransmitters uptake such as histamine, dopamine, adrenaline/epinephrine, noradrenaline/norepinephrine, serotonin and tyramine, thereby supporting a physiological role in the central nervous system by regulating interstitial concentrations of neurotransmitters. Also capable of transporting dopaminergic neuromodulators cyclo(his-pro), salsolinol and N-methyl-salsolinol, thereby involved in the maintenance of dopaminergic cell integrity in the central nervous system. Mediates the bidirectional transport of acetylcholine (ACh) at the apical membrane of ciliated cell in airway epithelium, thereby playing a role in luminal release of ACh from bronchial epithelium. Also transports guanidine and endogenous monoamines such as vitamin B1/thiamine, creatinine and N-1-methylnicotinamide (NMN). Mediates the uptake and efflux of quaternary ammonium compound choline. Mediates the bidirectional transport of polyamine agmatine and the uptake of polyamines putrescine and spermidine. Able to transport non-amine endogenous compounds such as prostaglandin E2 (PGE2) and prostaglandin F2-alpha (PGF2-alpha). Also involved in the uptake of xenobiotic 4-(4-(dimethylamino)styryl)-N-methylpyridinium (ASP). May contribute to regulate the transport of organic compounds in testis across the blood-testis-barrier. The sequence is that of Solute carrier family 22 member 2 (SLC22A2) from Oryctolagus cuniculus (Rabbit).